Reading from the N-terminus, the 145-residue chain is D-aminoacyl-tRNA deacylase (145 aa).

Residues Gly137 to Pro138 carry the Gly-cisPro motif, important for rejection of L-amino acids motif.

Belongs to the DTD family. Homodimer.

Its subcellular location is the cytoplasm. The catalysed reaction is glycyl-tRNA(Ala) + H2O = tRNA(Ala) + glycine + H(+). The enzyme catalyses a D-aminoacyl-tRNA + H2O = a tRNA + a D-alpha-amino acid + H(+). In terms of biological role, an aminoacyl-tRNA editing enzyme that deacylates mischarged D-aminoacyl-tRNAs. Also deacylates mischarged glycyl-tRNA(Ala), protecting cells against glycine mischarging by AlaRS. Acts via tRNA-based rather than protein-based catalysis; rejects L-amino acids rather than detecting D-amino acids in the active site. By recycling D-aminoacyl-tRNA to D-amino acids and free tRNA molecules, this enzyme counteracts the toxicity associated with the formation of D-aminoacyl-tRNA entities in vivo and helps enforce protein L-homochirality. This Rhodococcus jostii (strain RHA1) protein is D-aminoacyl-tRNA deacylase.